A 129-amino-acid polypeptide reads, in one-letter code: Glycine cleavage system H protein (129 aa).

Positions I24–R106 constitute a Lipoyl-binding domain. Position 65 is an N6-lipoyllysine (K65).

The protein belongs to the GcvH family. In terms of assembly, the glycine cleavage system is composed of four proteins: P, T, L and H. The cofactor is (R)-lipoate.

In terms of biological role, the glycine cleavage system catalyzes the degradation of glycine. The H protein shuttles the methylamine group of glycine from the P protein to the T protein. The polypeptide is Glycine cleavage system H protein (Synechococcus sp. (strain JA-2-3B'a(2-13)) (Cyanobacteria bacterium Yellowstone B-Prime)).